Here is a 636-residue protein sequence, read N- to C-terminus: Fructose-1,6-bisphosphatase class 3 (636 aa).

The protein belongs to the FBPase class 3 family. Requires Mn(2+) as cofactor.

It carries out the reaction beta-D-fructose 1,6-bisphosphate + H2O = beta-D-fructose 6-phosphate + phosphate. The protein operates within carbohydrate biosynthesis; gluconeogenesis. The chain is Fructose-1,6-bisphosphatase class 3 from Streptococcus gordonii (strain Challis / ATCC 35105 / BCRC 15272 / CH1 / DL1 / V288).